The sequence spans 860 residues: MLGQIVGGLIGGHHDSKKVKGTVVMMKKNALDFTDLAGSLTDKIFEALGQKVSFQLISSVQSDPANGLQGKHSNPAYLENFLFTLTPLAAGETAFGVTFDWNEEFGVPGAFIIKNTHINEFFLKSLTLEDVPNHGKVHFVCNSWVYPSFRYKSDRIFFANQPYLPSETPELLRKYRENELLTLRGDGTGKREAWDRIYDYDVYNDLGNPDQGKENVRTTLGGSADYPYPRRGRTGRPPTRTDPKSESRIPLILSLDIYVPRDERFGHLKMSDFLTYALKSIVQFILPELHALFDGTPNEFDSFEDVLRLYEGGIRLPQGPLFKALTDAIPLEMIRELLRTDGEGILRFPTPLVIKDSKTAWRTDEEFAREMLAGVNPIIISRLQEFPPKSKLDPEAYGNQNSTITAEHIEDKLDGLTVDEAMNNNKLFILNHHDVLIPYLRRINTTTTKTYASRTLLFLQDNGSLKPLAIELSLPHPDGDQFGVTSKVYTPSDQGVESSIWQLAKAYVAVNDSGVHQLISHWLNTHAVIEPFVIATNRQLSVLHPIHKLLYPHFRDTMNINAMARQILINAGGVLESTVFPSKFAMEMSAVVYKDWVFPDQALPADLVKRGVAVEDSSSPHGVRLLIEDYPYAVDGLEIWSAIKSWVTDYCSFYYGSDEEILKDNELQAWWKELREVGHGDKKNEPWWPEMETPQELIDSCTTIIWIASALHAAVNFGQYPYAGYLPNRPTVSRRFMPEPGTPEYEELKKNPDKAFLKTITAQLQTLLGVSLIEILSRHTTDEIYLGQRESPEWTKDKEPLAAFDKFGKKLTDIEKQIIQRNGDNILINRSGPVNAPYTLLFPTSEGGLTGKGIPNSVSI.

One can recognise a PLAT domain in the interval 29–159; the sequence is NALDFTDLAG…RYKSDRIFFA (131 aa). A Lipoxygenase domain is found at 162–860; it reads PYLPSETPEL…GKGIPNSVSI (699 aa). The segment at 209-246 is disordered; sequence PDQGKENVRTTLGGSADYPYPRRGRTGRPPTRTDPKSE. Residues His-521, His-526, His-712, Asn-716, and Ile-860 each coordinate Fe cation.

The protein belongs to the lipoxygenase family. As to quaternary structure, monomer. Fe cation is required as a cofactor. Expressed in tubers and roots. Not detected in leaves, flowers, stems, shoot tips, or axillary buds.

It localises to the cytoplasm. The enzyme catalyses (9Z,12Z)-octadecadienoate + O2 = (9S)-hydroperoxy-(10E,12Z)-octadecadienoate. It functions in the pathway lipid metabolism; oxylipin biosynthesis. Functionally, plant lipoxygenases may be involved in a number of diverse aspects of plant physiology including growth and development, pest resistance, and senescence or responses to wounding. Catalyzes the hydroperoxidation of lipids containing a cis,cis-1,4-pentadiene structure. The polypeptide is Probable linoleate 9S-lipoxygenase 4 (LOX1.4) (Solanum tuberosum (Potato)).